We begin with the raw amino-acid sequence, 92 residues long: Cell division protein FtsB (92 aa).

The Cytoplasmic segment spans residues 1-3 (MRL). A helical transmembrane segment spans residues 4–21 (LILILLSVLVLFQHDFWF). Residues 22 to 92 (GSNGFLDYRQ…VFYHIVKESK (71 aa)) lie on the Periplasmic side of the membrane. The stretch at 28 to 63 (DYRQNAEKIKENQAENEKLSQRNQRINAEIQGLTKG) forms a coiled coil.

The protein belongs to the FtsB family. As to quaternary structure, part of a complex composed of FtsB, FtsL and FtsQ.

The protein localises to the cell inner membrane. In terms of biological role, essential cell division protein. May link together the upstream cell division proteins, which are predominantly cytoplasmic, with the downstream cell division proteins, which are predominantly periplasmic. The sequence is that of Cell division protein FtsB from Haemophilus influenzae (strain PittEE).